The chain runs to 212 residues: MKQLFRQWYDLSEIKKELTTRNWFPATSGNISIKVSHEPLTFLITASGKDKTKTTPDDFLLVDHLGVPVLETELRPSAETILHTHIYNNTNAGCVLHVHTTDNNVITNLYSDAVTLQNQEIIKALDIWEEDATIHIPIIENHAHIPTLGENFRKHIQGDSGAVLIRNHGITVWGRDSFDAKKRLEAYEFLFQFHIKLLSIQGGVSNGANSYS.

Zn(2+) is bound by residues H97 and H99.

Belongs to the aldolase class II family. MtnB subfamily. Homotetramer. Requires Zn(2+) as cofactor.

It carries out the reaction 5-(methylsulfanyl)-D-ribulose 1-phosphate = 5-methylsulfanyl-2,3-dioxopentyl phosphate + H2O. It functions in the pathway amino-acid biosynthesis; L-methionine biosynthesis via salvage pathway; L-methionine from S-methyl-5-thio-alpha-D-ribose 1-phosphate: step 2/6. Its function is as follows. Catalyzes the dehydration of methylthioribulose-1-phosphate (MTRu-1-P) into 2,3-diketo-5-methylthiopentyl-1-phosphate (DK-MTP-1-P). The chain is Methylthioribulose-1-phosphate dehydratase from Bacillus cereus (strain AH187).